The following is a 417-amino-acid chain: Multifunctional CCA protein (417 aa).

Residues G8 and R11 each coordinate ATP. Residues G8 and R11 each coordinate CTP. Mg(2+)-binding residues include D21 and D23. Positions 91, 137, and 140 each coordinate ATP. R91, R137, and R140 together coordinate CTP. The HD domain occupies 225–326; sequence SGIHTLMTLQ…LNVLKKTDAF (102 aa).

This sequence belongs to the tRNA nucleotidyltransferase/poly(A) polymerase family. Bacterial CCA-adding enzyme type 1 subfamily. As to quaternary structure, monomer. Can also form homodimers and oligomers. The cofactor is Mg(2+). Requires Ni(2+) as cofactor.

It carries out the reaction a tRNA precursor + 2 CTP + ATP = a tRNA with a 3' CCA end + 3 diphosphate. The catalysed reaction is a tRNA with a 3' CCA end + 2 CTP + ATP = a tRNA with a 3' CCACCA end + 3 diphosphate. Catalyzes the addition and repair of the essential 3'-terminal CCA sequence in tRNAs without using a nucleic acid template. Adds these three nucleotides in the order of C, C, and A to the tRNA nucleotide-73, using CTP and ATP as substrates and producing inorganic pyrophosphate. tRNA 3'-terminal CCA addition is required both for tRNA processing and repair. Also involved in tRNA surveillance by mediating tandem CCA addition to generate a CCACCA at the 3' terminus of unstable tRNAs. While stable tRNAs receive only 3'-terminal CCA, unstable tRNAs are marked with CCACCA and rapidly degraded. This chain is Multifunctional CCA protein, found in Neisseria meningitidis serogroup A / serotype 4A (strain DSM 15465 / Z2491).